Consider the following 627-residue polypeptide: Protein fem-1 homolog B (627 aa).

4 ANK repeats span residues 45–74, 87–116, 120–149, and 153–182; these read QRST…VQTQ, DGAT…NVNH, TNST…NISI, and YDNT…DPNA. 3 residues coordinate Zn(2+): His185, Cys186, and His218. ANK repeat units follow at residues 186-215 and 218-248; these read CGAT…AIVV and HGMT…DRRS. The stretch at 344-377 is one TPR repeat; the sequence is SHPIIYRGAVYADNMEFEQCIKLWLHALHLRQKG. ANK repeat units lie at residues 483-527 and 531-568; these read EGFT…EVNA and EGNS…HTDM.

The protein belongs to the fem-1 family. In terms of assembly, component of a CRL2 E3 ubiquitin-protein ligase complex, also named ECS (Elongin BC-CUL2/5-SOCS-box protein) complex, composed of CUL2, Elongin BC (ELOB and ELOC), RBX1 and substrate-specific adapter FEM1B. Homooligomer. Interacts with PPM1F and PHTF1. Interacts with the death domain of FAS/TNFRSF6 and TNFRSF1A. Interacts with CHEK1. Interacts with NKX3-1. As to expression, present in adult testis (at protein level).

It is found in the cytoplasm. It localises to the nucleus. It functions in the pathway protein modification; protein ubiquitination. Activity of the CRL2(FEM1B) complex toward FNIP1 is inhibited by BEX family proteins (BEX1, BEX2, BEX3 and/or BEX4) in absence of reductive stress. Mechanistically, BEX proteins act as pseudosubstrate inhibitors that associate with FEM1B via zinc in absence of reductive stress, thereby preventing association between FEM1B and FNIP1. In terms of biological role, substrate-recognition component of a Cul2-RING (CRL2) E3 ubiquitin-protein ligase complex of the DesCEND (destruction via C-end degrons) pathway, which recognizes a C-degron located at the extreme C terminus of target proteins, leading to their ubiquitination and degradation. The C-degron recognized by the DesCEND pathway is usually a motif of less than ten residues and can be present in full-length proteins, truncated proteins or proteolytically cleaved forms. The CRL2(FEM1B) complex specifically recognizes proteins ending with -Gly-Leu-Asp-Arg, such as CDK5R1, leading to their ubiquitination and degradation. Also acts as a regulator of the reductive stress response by mediating ubiquitination of reduced FNIP1: in response to reductive stress, the CRL2(FEM1B) complex specifically recognizes a conserved Cys degron in FNIP1 when this degron is reduced, leading to FNIP1 degradation and subsequent activation of mitochondria to recalibrate reactive oxygen species (ROS). Mechanistically, recognizes and binds reduced FNIP1 through two interface zinc ions, which act as a molecular glue that recruit reduced FNIP1 to FEM1B. Promotes ubiquitination of GLI1, suppressing GLI1 transcriptional activator activity. Promotes ubiquitination and degradation of ANKRD37. Promotes ubiquitination and degradation of SLBP. Involved in apoptosis by acting as a death receptor-associated protein that mediates apoptosis. Also involved in glucose homeostasis in pancreatic islet. May also act as an adapter/mediator in replication stress-induced signaling that leads to the activation of CHEK1. In Rattus norvegicus (Rat), this protein is Protein fem-1 homolog B.